Here is a 166-residue protein sequence, read N- to C-terminus: Regulatory protein RecX (166 aa).

This sequence belongs to the RecX family.

Its subcellular location is the cytoplasm. In terms of biological role, modulates RecA activity. This Escherichia coli O139:H28 (strain E24377A / ETEC) protein is Regulatory protein RecX.